Consider the following 431-residue polypeptide: UDP-N-acetylmuramate--L-alanine ligase (431 aa).

108-114 serves as a coordination point for ATP; sequence GSHGKTS.

This sequence belongs to the MurCDEF family.

The protein localises to the cytoplasm. It catalyses the reaction UDP-N-acetyl-alpha-D-muramate + L-alanine + ATP = UDP-N-acetyl-alpha-D-muramoyl-L-alanine + ADP + phosphate + H(+). It functions in the pathway cell wall biogenesis; peptidoglycan biosynthesis. Cell wall formation. In Exiguobacterium sibiricum (strain DSM 17290 / CCUG 55495 / CIP 109462 / JCM 13490 / 255-15), this protein is UDP-N-acetylmuramate--L-alanine ligase.